The sequence spans 292 residues: Insulin-like growth factor-binding protein 3 (292 aa).

An N-terminal signal peptide occupies residues 1–27 (MHPARPALWAAALTALTLLRGPPVARA). The IGFBP N-terminal domain occupies 36 to 119 (PVVRCEPCDA…LNGRGFCANA (84 aa)). 6 disulfide bridges follow: cysteine 40–cysteine 69, cysteine 43–cysteine 71, cysteine 51–cysteine 72, cysteine 60–cysteine 75, cysteine 83–cysteine 96, and cysteine 90–cysteine 116. 2 N-linked (GlcNAc...) asparagine glycosylation sites follow: asparagine 118 and asparagine 137. Disordered stretches follow at residues 128–152 (YLPS…SVES) and 178–212 (KGHA…TEYG). Serine 149 bears the Phosphoserine mark. A compositionally biased stretch (basic and acidic residues) spans 178–191 (KGHARDSQRYKVDY). Over residues 192–203 (ESQSTDTQNFSS) the composition is skewed to polar residues. N-linked (GlcNAc...) asparagine glycosylation occurs at asparagine 200. Serine 202 carries the phosphoserine modification. A Thyroglobulin type-1 domain is found at 211-286 (YGPCRREMED…DTKGKDDVHC (76 aa)). Intrachain disulfides connect cysteine 214–cysteine 241, cysteine 252–cysteine 263, and cysteine 265–cysteine 286.

In terms of assembly, interacts with XLKD1. Binds IGF2 more than IGF1. Forms a ternary complex of about 140 to 150 kDa with IGF1 or IGF2 and a 85 kDa glycoprotein (ALS). Interacts with TMEM219. Post-translationally, phosphorylated by FAM20C in the extracellular medium.

The protein localises to the secreted. Its function is as follows. IGF-binding proteins prolong the half-life of the IGFs and have been shown to either inhibit or stimulate the growth promoting effects of the IGFs on cell culture. They alter the interaction of IGFs with their cell surface receptors. Also exhibits IGF-independent antiproliferative and apoptotic effects mediated by its receptor TMEM219/IGFBP-3R. Promotes testicular germ cell apoptosis. The sequence is that of Insulin-like growth factor-binding protein 3 (Igfbp3) from Mus musculus (Mouse).